The primary structure comprises 55 residues: Large ribosomal subunit protein bL33 (55 aa).

The protein belongs to the bacterial ribosomal protein bL33 family.

This is Large ribosomal subunit protein bL33 from Yersinia pestis (strain Pestoides F).